Consider the following 804-residue polypeptide: Phenylalanine--tRNA ligase beta subunit (804 aa).

One can recognise a tRNA-binding domain in the interval 40–161 (FSMIDYLIIG…KANLGDTEVY (122 aa)). The region spanning 413–486 (EYHQQVKVNY…KILNINLFQP (74 aa)) is the B5 domain. Mg(2+) is bound by residues D464, D470, E473, and E474. Residues 710-804 (DHYQEVTRDI…DLMKTKQILI (95 aa)) enclose the FDX-ACB domain.

The protein belongs to the phenylalanyl-tRNA synthetase beta subunit family. Type 1 subfamily. Tetramer of two alpha and two beta subunits. Mg(2+) is required as a cofactor.

It localises to the cytoplasm. It carries out the reaction tRNA(Phe) + L-phenylalanine + ATP = L-phenylalanyl-tRNA(Phe) + AMP + diphosphate + H(+). This chain is Phenylalanine--tRNA ligase beta subunit, found in Mycoplasmoides gallisepticum (strain R(low / passage 15 / clone 2)) (Mycoplasma gallisepticum).